The sequence spans 276 residues: Octanoyltransferase LipM (276 aa).

One can recognise a BPL/LPL catalytic domain in the interval 33 to 247 (GELKPTLRFY…GFKDAFSLTF (215 aa)). Cys150 acts as the Acyl-thioester intermediate in catalysis.

This sequence belongs to the octanoyltransferase LipM family. In terms of assembly, monomer.

It catalyses the reaction octanoyl-[ACP] + L-lysyl-[protein] = N(6)-octanoyl-L-lysyl-[protein] + holo-[ACP] + H(+). It functions in the pathway protein modification; protein lipoylation via endogenous pathway; protein N(6)-(lipoyl)lysine from octanoyl-[acyl-carrier-protein]. Its function is as follows. Catalyzes the transfer of endogenously produced octanoic acid from octanoyl-acyl-carrier-protein onto the lipoyl domain of GcvH, an intermediate carrier during protein lipoylation. This is Octanoyltransferase LipM from Exiguobacterium sp. (strain ATCC BAA-1283 / AT1b).